The following is a 250-amino-acid chain: Small ribosomal subunit protein uS2 (250 aa).

Belongs to the universal ribosomal protein uS2 family.

The chain is Small ribosomal subunit protein uS2 from Acidovorax sp. (strain JS42).